Here is a 470-residue protein sequence, read N- to C-terminus: 3-isopropylmalate dehydratase large subunit (470 aa).

Positions 349, 409, and 412 each coordinate [4Fe-4S] cluster.

Belongs to the aconitase/IPM isomerase family. LeuC type 1 subfamily. As to quaternary structure, heterodimer of LeuC and LeuD. It depends on [4Fe-4S] cluster as a cofactor.

It catalyses the reaction (2R,3S)-3-isopropylmalate = (2S)-2-isopropylmalate. Its pathway is amino-acid biosynthesis; L-leucine biosynthesis; L-leucine from 3-methyl-2-oxobutanoate: step 2/4. Functionally, catalyzes the isomerization between 2-isopropylmalate and 3-isopropylmalate, via the formation of 2-isopropylmaleate. The polypeptide is 3-isopropylmalate dehydratase large subunit (Campylobacter jejuni subsp. jejuni serotype O:2 (strain ATCC 700819 / NCTC 11168)).